We begin with the raw amino-acid sequence, 302 residues long: Large ribosomal subunit protein uL3c (302 aa).

A chloroplast-targeting transit peptide spans methionine 1–methionine 36. Residues phenylalanine 208–alanine 239 are disordered.

This sequence belongs to the universal ribosomal protein uL3 family. As to quaternary structure, part of the 50S ribosomal subunit.

The protein localises to the plastid. It localises to the chloroplast. Its function is as follows. One of the primary rRNA binding proteins, it binds directly near the 3'-end of the 23S rRNA, where it nucleates assembly of the 50S subunit. This is Large ribosomal subunit protein uL3c (RPL3) from Bigelowiella natans (Pedinomonas minutissima).